The following is a 174-amino-acid chain: Probable nicotinate-nucleotide adenylyltransferase (174 aa).

Belongs to the NadD family.

It carries out the reaction nicotinate beta-D-ribonucleotide + ATP + H(+) = deamido-NAD(+) + diphosphate. It participates in cofactor biosynthesis; NAD(+) biosynthesis; deamido-NAD(+) from nicotinate D-ribonucleotide: step 1/1. Functionally, catalyzes the reversible adenylation of nicotinate mononucleotide (NaMN) to nicotinic acid adenine dinucleotide (NaAD). This Helicobacter pylori (strain HPAG1) protein is Probable nicotinate-nucleotide adenylyltransferase.